Here is a 383-residue protein sequence, read N- to C-terminus: Carbamoyl phosphate synthase small chain (383 aa).

The segment at 1–190 is CPSase; that stretch reads MPHPSSRQAH…FDQRLKQHPD (190 aa). L-glutamine contacts are provided by Ser51, Gly242, and Gly244. In terms of domain architecture, Glutamine amidotransferase type-1 spans 194–381; it reads RVVAIDFGIK…VALMADRRDV (188 aa). Cys271 acts as the Nucleophile in catalysis. Residues Leu272, Gln275, Asn311, Gly313, and Phe314 each coordinate L-glutamine. Catalysis depends on residues His354 and Glu356.

It belongs to the CarA family. Composed of two chains; the small (or glutamine) chain promotes the hydrolysis of glutamine to ammonia, which is used by the large (or ammonia) chain to synthesize carbamoyl phosphate. Tetramer of heterodimers (alpha,beta)4.

The catalysed reaction is hydrogencarbonate + L-glutamine + 2 ATP + H2O = carbamoyl phosphate + L-glutamate + 2 ADP + phosphate + 2 H(+). The enzyme catalyses L-glutamine + H2O = L-glutamate + NH4(+). It participates in amino-acid biosynthesis; L-arginine biosynthesis; carbamoyl phosphate from bicarbonate: step 1/1. Its pathway is pyrimidine metabolism; UMP biosynthesis via de novo pathway; (S)-dihydroorotate from bicarbonate: step 1/3. In terms of biological role, small subunit of the glutamine-dependent carbamoyl phosphate synthetase (CPSase). CPSase catalyzes the formation of carbamoyl phosphate from the ammonia moiety of glutamine, carbonate, and phosphate donated by ATP, constituting the first step of 2 biosynthetic pathways, one leading to arginine and/or urea and the other to pyrimidine nucleotides. The small subunit (glutamine amidotransferase) binds and cleaves glutamine to supply the large subunit with the substrate ammonia. This chain is Carbamoyl phosphate synthase small chain, found in Parasynechococcus marenigrum (strain WH8102).